The chain runs to 142 residues: Cell division protein SepF (142 aa).

This sequence belongs to the SepF family. Homodimer. Interacts with FtsZ.

It is found in the cytoplasm. Its function is as follows. Cell division protein that is part of the divisome complex and is recruited early to the Z-ring. Probably stimulates Z-ring formation, perhaps through the cross-linking of FtsZ protofilaments. Its function overlaps with FtsA. This Geobacillus kaustophilus (strain HTA426) protein is Cell division protein SepF.